The following is a 447-amino-acid chain: Argininosuccinate synthase (447 aa).

ATP-binding positions include 20 to 28 (AFSGGLDTS) and Ala46. Position 102 (Tyr102) interacts with L-citrulline. ATP-binding residues include Gly132 and Thr134. The L-aspartate site is built by Thr134, Asn138, and Asp139. Asn138 contacts L-citrulline. An ATP-binding site is contributed by Asp139. The L-citrulline site is built by Arg142 and Ser195. Asp197 is a binding site for ATP. L-citrulline is bound by residues Thr204, Glu206, and Glu283.

This sequence belongs to the argininosuccinate synthase family. Type 2 subfamily. As to quaternary structure, homotetramer.

The protein localises to the cytoplasm. The catalysed reaction is L-citrulline + L-aspartate + ATP = 2-(N(omega)-L-arginino)succinate + AMP + diphosphate + H(+). The protein operates within amino-acid biosynthesis; L-arginine biosynthesis; L-arginine from L-ornithine and carbamoyl phosphate: step 2/3. This is Argininosuccinate synthase from Neisseria meningitidis serogroup C (strain 053442).